The primary structure comprises 183 residues: uncharacterized protein (183 aa).

This sequence belongs to the asfivirus S183L family.

This is an uncharacterized protein from African swine fever virus (isolate Warthog/Namibia/Wart80/1980) (ASFV).